A 271-amino-acid polypeptide reads, in one-letter code: Putative hydro-lyase OCAR_7359/OCA5_c07590 (271 aa).

The protein belongs to the D-glutamate cyclase family.

This is Putative hydro-lyase OCAR_7359/OCA5_c07590 from Afipia carboxidovorans (strain ATCC 49405 / DSM 1227 / KCTC 32145 / OM5) (Oligotropha carboxidovorans).